Here is an 89-residue protein sequence, read N- to C-terminus: MLFEIIYIVSSLFYIVSIIYTLMRIKHINTVAKKEEIRKEIIEYMRSDEVTNIIVKALNESDINKKLNAIVLALCTHVQELKKSKLCEG.

A topological domain (cytoplasmic) is located at residue methionine 1. A helical transmembrane segment spans residues 2–22 (LFEIIYIVSSLFYIVSIIYTL). The Extracellular segment spans residues 23 to 89 (MRIKHINTVA…ELKKSKLCEG (67 aa)).

It localises to the host membrane. This is an uncharacterized protein from Sulfolobus islandicus filamentous virus (isolate Iceland/Hveragerdi) (SIFV).